A 119-amino-acid polypeptide reads, in one-letter code: Putative F420H(2)-dependent quinone reductase Rv3178 (119 aa).

Coenzyme F420-(gamma-Glu)n is bound by residues 21-23 (RKS), 27-32 (FVAPLL), 43-46 (VASA), and 54-58 (QWYRN).

The protein belongs to the F420H(2)-dependent quinone reductase family.

It is found in the cell membrane. The enzyme catalyses oxidized coenzyme F420-(gamma-L-Glu)(n) + a quinol + H(+) = reduced coenzyme F420-(gamma-L-Glu)(n) + a quinone. In terms of biological role, involved in a F420-dependent anti-oxidant mechanism that protects M.tuberculosis against oxidative stress and bactericidal agents. Catalyzes the F420H(2)-dependent two-electron reduction of quinones to dihydroquinones, thereby preventing the formation of cytotoxic semiquinones obtained by the one-electron reduction pathway. Since menaquinone is the sole quinone electron carrier in the respiratory chain in M.tuberculosis, the physiological electron acceptor for Fqr-mediated F420H(2) oxidation is therefore likely to be the endogenous menaquinone found in the membrane fraction of M.tuberculosis. The protein is Putative F420H(2)-dependent quinone reductase Rv3178 of Mycobacterium tuberculosis (strain ATCC 25618 / H37Rv).